The chain runs to 712 residues: Anaerobic ribonucleoside-triphosphate reductase (712 aa).

The region spanning 3–92 (PHVMKRDGCK…EYRHDRDIQR (90 aa)) is the ATP-cone domain. The region spanning 583–708 (KKVNPYDKID…VKRRVKHLGN (126 aa)) is the Glycine radical domain. Residues Cys644, Cys647, Cys662, and Cys665 each coordinate Zn(2+). The residue at position 681 (Gly681) is a Glycine radical.

This sequence belongs to the anaerobic ribonucleoside-triphosphate reductase family. Forms a tetramer composed of two NrdD and two NrdG subunits.

The enzyme catalyses a ribonucleoside 5'-triphosphate + formate + H(+) = a 2'-deoxyribonucleoside 5'-triphosphate + CO2 + H2O. Activated under anaerobic conditions by NrdG, a tightly associated activase. Activation involves the formation of a glycyl radical at Gly-681. In terms of biological role, catalyzes the conversion of ribonucleotides into deoxyribonucleotides, which are required for DNA synthesis and repair. The sequence is that of Anaerobic ribonucleoside-triphosphate reductase (nrdD) from Salmonella typhimurium (strain LT2 / SGSC1412 / ATCC 700720).